The sequence spans 499 residues: Glutamate--tRNA ligase (499 aa).

Residues 12-22 (PSPTGHLHIGN) carry the 'HIGH' region motif. A 'KMSKS' region motif is present at residues 259–263 (KLSKR). Residue Lys262 participates in ATP binding.

It belongs to the class-I aminoacyl-tRNA synthetase family. Glutamate--tRNA ligase type 1 subfamily. As to quaternary structure, monomer.

The protein localises to the cytoplasm. The enzyme catalyses tRNA(Glu) + L-glutamate + ATP = L-glutamyl-tRNA(Glu) + AMP + diphosphate. In terms of biological role, catalyzes the attachment of glutamate to tRNA(Glu) in a two-step reaction: glutamate is first activated by ATP to form Glu-AMP and then transferred to the acceptor end of tRNA(Glu). The sequence is that of Glutamate--tRNA ligase from Lactobacillus gasseri (strain ATCC 33323 / DSM 20243 / BCRC 14619 / CIP 102991 / JCM 1131 / KCTC 3163 / NCIMB 11718 / NCTC 13722 / AM63).